The sequence spans 603 residues: NADH-ubiquinone oxidoreductase chain 5 (603 aa).

Helical transmembrane passes span 4 to 24 (YTTM…TTLI), 38 to 58 (SIIA…MCLD), 87 to 107 (MTFI…SLWY), 122 to 142 (LIFL…QLFI), 144 to 160 (WEGV…WWYA), 171 to 191 (AILY…WFLL), 211 to 233 (TPLL…HPWL), 241 to 261 (TPVS…FLLI), 272 to 292 (LIQT…AICA), 301 to 320 (IVAF…IGIN), 325 to 347 (AFLH…GSII), 370 to 390 (STSL…TGFY), 407 to 429 (WALS…MILL), 457 to 477 (LTIG…PMST), 482 to 502 (IPLY…LTAL), and 583 to 603 (MIKL…LLIM).

Belongs to the complex I subunit 5 family. Core subunit of respiratory chain NADH dehydrogenase (Complex I) which is composed of 45 different subunits.

Its subcellular location is the mitochondrion inner membrane. It catalyses the reaction a ubiquinone + NADH + 5 H(+)(in) = a ubiquinol + NAD(+) + 4 H(+)(out). Core subunit of the mitochondrial membrane respiratory chain NADH dehydrogenase (Complex I) which catalyzes electron transfer from NADH through the respiratory chain, using ubiquinone as an electron acceptor. Essential for the catalytic activity and assembly of complex I. The sequence is that of NADH-ubiquinone oxidoreductase chain 5 (MT-ND5) from Pan paniscus (Pygmy chimpanzee).